A 142-amino-acid chain; its full sequence is Peptide methionine sulfoxide reductase MsrB (142 aa).

The MsrB domain occupies E10–E132. Zn(2+)-binding residues include C49, C52, C98, and C101. The active-site Nucleophile is the C121.

Belongs to the MsrB Met sulfoxide reductase family. It depends on Zn(2+) as a cofactor.

The enzyme catalyses L-methionyl-[protein] + [thioredoxin]-disulfide + H2O = L-methionyl-(R)-S-oxide-[protein] + [thioredoxin]-dithiol. This Methanosarcina barkeri (strain Fusaro / DSM 804) protein is Peptide methionine sulfoxide reductase MsrB.